The chain runs to 239 residues: Orotidine 5'-phosphate decarboxylase (239 aa).

Substrate contacts are provided by residues Asp15, Lys36, 63–72, Thr127, Arg189, Gln198, Gly218, and Arg219; that span reads DLKFHDIPNT. Lys65 functions as the Proton donor in the catalytic mechanism.

This sequence belongs to the OMP decarboxylase family. Type 1 subfamily. As to quaternary structure, homodimer.

The catalysed reaction is orotidine 5'-phosphate + H(+) = UMP + CO2. Its pathway is pyrimidine metabolism; UMP biosynthesis via de novo pathway; UMP from orotate: step 2/2. Catalyzes the decarboxylation of orotidine 5'-monophosphate (OMP) to uridine 5'-monophosphate (UMP). This chain is Orotidine 5'-phosphate decarboxylase, found in Prochlorococcus marinus (strain MIT 9515).